The sequence spans 259 residues: UPF0246 protein Rfer_2372 (259 aa).

It belongs to the UPF0246 family.

The protein is UPF0246 protein Rfer_2372 of Albidiferax ferrireducens (strain ATCC BAA-621 / DSM 15236 / T118) (Rhodoferax ferrireducens).